An 81-amino-acid chain; its full sequence is UPF0248 protein SSO2687 (81 aa).

It belongs to the UPF0248 family.

The protein is UPF0248 protein SSO2687 of Saccharolobus solfataricus (strain ATCC 35092 / DSM 1617 / JCM 11322 / P2) (Sulfolobus solfataricus).